We begin with the raw amino-acid sequence, 226 residues long: 2-C-methyl-D-erythritol 4-phosphate cytidylyltransferase (226 aa).

It belongs to the IspD/TarI cytidylyltransferase family. IspD subfamily.

It catalyses the reaction 2-C-methyl-D-erythritol 4-phosphate + CTP + H(+) = 4-CDP-2-C-methyl-D-erythritol + diphosphate. Its pathway is isoprenoid biosynthesis; isopentenyl diphosphate biosynthesis via DXP pathway; isopentenyl diphosphate from 1-deoxy-D-xylulose 5-phosphate: step 2/6. Its function is as follows. Catalyzes the formation of 4-diphosphocytidyl-2-C-methyl-D-erythritol from CTP and 2-C-methyl-D-erythritol 4-phosphate (MEP). In Actinobacillus pleuropneumoniae serotype 7 (strain AP76), this protein is 2-C-methyl-D-erythritol 4-phosphate cytidylyltransferase.